The sequence spans 275 residues: MPELPEVETTLRGIAPHIEGKTVEAVVLRQLKLRWQINPDLGEILSGRQVLSCGRRAKYLIVRFQTGILLIHLGMSGSLRIFTPSDGRIGRSDRHDHVDIVFSDGTVMRYRDPRKFGAILWYEGIEEHHPLLEKLGPEPLSEAFCTDYLYVRLKAQKRAVKLALMDNAVVVGVGNIYANESLFRAGISPHRPANRLKKKECALLVETVKAVLRRAIETGGSTLRDFVDSDGKSGYFQQEYTVYGRHNQPCPQCGGLVVKETLGQRGTFYCPNCQK.

P2 serves as the catalytic Schiff-base intermediate with DNA. Catalysis depends on E3, which acts as the Proton donor. The active-site Proton donor; for beta-elimination activity is the K58. Residues H95 and R114 each coordinate DNA. The segment at 241-275 adopts an FPG-type zinc-finger fold; the sequence is TVYGRHNQPCPQCGGLVVKETLGQRGTFYCPNCQK. R265 acts as the Proton donor; for delta-elimination activity in catalysis.

Belongs to the FPG family. In terms of assembly, monomer. Requires Zn(2+) as cofactor.

It catalyses the reaction Hydrolysis of DNA containing ring-opened 7-methylguanine residues, releasing 2,6-diamino-4-hydroxy-5-(N-methyl)formamidopyrimidine.. The catalysed reaction is 2'-deoxyribonucleotide-(2'-deoxyribose 5'-phosphate)-2'-deoxyribonucleotide-DNA = a 3'-end 2'-deoxyribonucleotide-(2,3-dehydro-2,3-deoxyribose 5'-phosphate)-DNA + a 5'-end 5'-phospho-2'-deoxyribonucleoside-DNA + H(+). Involved in base excision repair of DNA damaged by oxidation or by mutagenic agents. Acts as a DNA glycosylase that recognizes and removes damaged bases. Has a preference for oxidized purines, such as 7,8-dihydro-8-oxoguanine (8-oxoG). Has AP (apurinic/apyrimidinic) lyase activity and introduces nicks in the DNA strand. Cleaves the DNA backbone by beta-delta elimination to generate a single-strand break at the site of the removed base with both 3'- and 5'-phosphates. The protein is Formamidopyrimidine-DNA glycosylase (mutM) of Neisseria meningitidis serogroup A / serotype 4A (strain DSM 15465 / Z2491).